A 769-amino-acid chain; its full sequence is Sensor histidine kinase ComP (769 aa).

The Cytoplasmic segment spans residues 1–9 (MKNLIKKFT). A helical transmembrane segment spans residues 10–33 (IAVIVLSILYISYTTYISMNGIII). The Extracellular segment spans residues 34 to 113 (GTKIHKNDKS…DFDLVTLNRP (80 aa)). A helical membrane pass occupies residues 114-134 (YSFFLFVLPLFFYFLSIICIF). Residues 135-144 (YILKVNKKRR) lie on the Cytoplasmic side of the membrane. A helical transmembrane segment spans residues 145–167 (SFAAYILILLLLDISIAYISAGG). At 168–235 (PFRGHIINRY…QDYLQVDIDF (68 aa)) the chain is on the extracellular side. A helical membrane pass occupies residues 236 to 257 (LATLNLVSFATLTLFSFSAIYL). Residues 258–272 (HLNKYKYAEHSFILK) lie on the Cytoplasmic side of the membrane. A helical membrane pass occupies residues 273–295 (LLILTNTLSFAPFLIFFVLPIIF). Over 296 to 299 (TGNY) the chain is Extracellular. Residues 300–323 (IFPALASASLLVLIPFGLVYQFVA) traverse the membrane as a helical segment. At 324-337 (NKMFDIEFILGRMR) the chain is on the cytoplasmic side. A helical transmembrane segment spans residues 338 to 357 (YYALLAMIPTLLIVGALVLF). The Extracellular portion of the chain corresponds to 358–361 (DVMD). A helical transmembrane segment spans residues 362-383 (IQMNPVRQTVFFFVVMFAVFYF). Over 384–769 (KEVMDFKFRL…GFKADIEIEL (386 aa)) the chain is Cytoplasmic. Positions 571 to 769 (LARDLHDSVL…GFKADIEIEL (199 aa)) constitute a Histidine kinase domain. At histidine 576 the chain carries Phosphohistidine; by autocatalysis.

In terms of processing, autophosphorylates on a histidine and transfers the phosphate group onto an aspartate in ComA, thus activating it.

Its subcellular location is the cell membrane. The enzyme catalyses ATP + protein L-histidine = ADP + protein N-phospho-L-histidine.. In terms of biological role, sensor in the two-component regulatory system ComP/ComA involved in a major quorum response pathway that regulates the development of genetic competence. Plays a role in sporulation, at least partly interchangeable with that of SpoIIJ. Probably activates ComA by phosphorylation. The polypeptide is Sensor histidine kinase ComP (comP) (Bacillus subtilis (strain 168)).